The sequence spans 353 residues: Photosystem II protein D1 (353 aa).

Residue Thr2 is modified to N-acetylthreonine. At Thr2 the chain carries Phosphothreonine. 3 helical membrane passes run 29–46, 118–133, and 142–156; these read YIGW…TATS, HFLL…EWEL, and WIAV…AATA. Residue His118 coordinates chlorophyll a. Tyr126 serves as a coordination point for pheophytin a. [CaMn4O5] cluster-binding residues include Asp170 and Glu189. A helical transmembrane segment spans residues 197–218; sequence FHMLGVAGVFGGSLFSAMHGSL. A chlorophyll a-binding site is contributed by His198. A quinone contacts are provided by residues His215 and 264–265; that span reads SF. His215 serves as a coordination point for Fe cation. His272 is a binding site for Fe cation. Residues 274-288 traverse the membrane as a helical segment; sequence FLAAWPVVGIWFTAL. [CaMn4O5] cluster contacts are provided by His332, Glu333, Asp342, and Ala344. Residues 345 to 353 constitute a propeptide that is removed on maturation; the sequence is SVEAPSVNA.

Belongs to the reaction center PufL/M/PsbA/D family. As to quaternary structure, PSII is composed of 1 copy each of membrane proteins PsbA, PsbB, PsbC, PsbD, PsbE, PsbF, PsbH, PsbI, PsbJ, PsbK, PsbL, PsbM, PsbT, PsbX, PsbY, PsbZ, Psb30/Ycf12, at least 3 peripheral proteins of the oxygen-evolving complex and a large number of cofactors. It forms dimeric complexes. The D1/D2 heterodimer binds P680, chlorophylls that are the primary electron donor of PSII, and subsequent electron acceptors. It shares a non-heme iron and each subunit binds pheophytin, quinone, additional chlorophylls, carotenoids and lipids. D1 provides most of the ligands for the Mn4-Ca-O5 cluster of the oxygen-evolving complex (OEC). There is also a Cl(-1) ion associated with D1 and D2, which is required for oxygen evolution. The PSII complex binds additional chlorophylls, carotenoids and specific lipids. serves as cofactor. Tyr-161 forms a radical intermediate that is referred to as redox-active TyrZ, YZ or Y-Z. Post-translationally, C-terminally processed by CTPA; processing is essential to allow assembly of the oxygen-evolving complex and thus photosynthetic growth.

It is found in the plastid. The protein localises to the chloroplast thylakoid membrane. The enzyme catalyses 2 a plastoquinone + 4 hnu + 2 H2O = 2 a plastoquinol + O2. Photosystem II (PSII) is a light-driven water:plastoquinone oxidoreductase that uses light energy to abstract electrons from H(2)O, generating O(2) and a proton gradient subsequently used for ATP formation. It consists of a core antenna complex that captures photons, and an electron transfer chain that converts photonic excitation into a charge separation. The D1/D2 (PsbA/PsbD) reaction center heterodimer binds P680, the primary electron donor of PSII as well as several subsequent electron acceptors. This chain is Photosystem II protein D1, found in Oltmannsiellopsis viridis (Marine flagellate).